Consider the following 430-residue polypeptide: Adenylosuccinate synthetase (430 aa).

GTP-binding positions include 13–19 (GDEGKGK) and 41–43 (GHT). Aspartate 14 acts as the Proton acceptor in catalysis. The Mg(2+) site is built by aspartate 14 and glycine 41. Residues 14–17 (DEGK), 39–42 (NAGH), threonine 130, arginine 144, glutamine 225, threonine 240, and arginine 304 each bind IMP. Histidine 42 acts as the Proton donor in catalysis. A substrate-binding site is contributed by 300–306 (ASTGRPR). GTP is bound by residues arginine 306, 332–334 (KLD), and 414–416 (STG).

Belongs to the adenylosuccinate synthetase family. In terms of assembly, homodimer. It depends on Mg(2+) as a cofactor.

It is found in the cytoplasm. The enzyme catalyses IMP + L-aspartate + GTP = N(6)-(1,2-dicarboxyethyl)-AMP + GDP + phosphate + 2 H(+). It functions in the pathway purine metabolism; AMP biosynthesis via de novo pathway; AMP from IMP: step 1/2. Functionally, plays an important role in the de novo pathway of purine nucleotide biosynthesis. Catalyzes the first committed step in the biosynthesis of AMP from IMP. The chain is Adenylosuccinate synthetase from Xanthomonas axonopodis pv. citri (strain 306).